A 75-amino-acid polypeptide reads, in one-letter code: UPF0270 protein PSPPH_1506 (75 aa).

The protein belongs to the UPF0270 family.

The chain is UPF0270 protein PSPPH_1506 from Pseudomonas savastanoi pv. phaseolicola (strain 1448A / Race 6) (Pseudomonas syringae pv. phaseolicola (strain 1448A / Race 6)).